We begin with the raw amino-acid sequence, 125 residues long: Large ribosomal subunit protein bL12 (125 aa).

This sequence belongs to the bacterial ribosomal protein bL12 family. Homodimer. Part of the ribosomal stalk of the 50S ribosomal subunit. Forms a multimeric L10(L12)X complex, where L10 forms an elongated spine to which 2 to 4 L12 dimers bind in a sequential fashion. Binds GTP-bound translation factors.

Its function is as follows. Forms part of the ribosomal stalk which helps the ribosome interact with GTP-bound translation factors. Is thus essential for accurate translation. This is Large ribosomal subunit protein bL12 from Gluconacetobacter diazotrophicus (strain ATCC 49037 / DSM 5601 / CCUG 37298 / CIP 103539 / LMG 7603 / PAl5).